The sequence spans 104 residues: Large ribosomal subunit protein bL21 (104 aa).

Belongs to the bacterial ribosomal protein bL21 family. In terms of assembly, part of the 50S ribosomal subunit. Contacts protein L20.

Its function is as follows. This protein binds to 23S rRNA in the presence of protein L20. This chain is Large ribosomal subunit protein bL21, found in Francisella tularensis subsp. holarctica (strain FTNF002-00 / FTA).